We begin with the raw amino-acid sequence, 579 residues long: V-type ATP synthase alpha chain (579 aa).

227–234 (GGFGTGKT) contributes to the ATP binding site.

It belongs to the ATPase alpha/beta chains family.

The catalysed reaction is ATP + H2O + 4 H(+)(in) = ADP + phosphate + 5 H(+)(out). Its function is as follows. Produces ATP from ADP in the presence of a proton gradient across the membrane. The V-type alpha chain is a catalytic subunit. The protein is V-type ATP synthase alpha chain of Anaeromyxobacter dehalogenans (strain 2CP-C).